We begin with the raw amino-acid sequence, 292 residues long: NAD kinase (292 aa).

The active-site Proton acceptor is Asp-64. NAD(+) contacts are provided by residues 64 to 65 (DG), 138 to 139 (ND), Arg-149, Arg-166, Asp-168, 179 to 184 (TGYAVS), and Gln-238.

It belongs to the NAD kinase family. Requires a divalent metal cation as cofactor.

It localises to the cytoplasm. It catalyses the reaction NAD(+) + ATP = ADP + NADP(+) + H(+). In terms of biological role, involved in the regulation of the intracellular balance of NAD and NADP, and is a key enzyme in the biosynthesis of NADP. Catalyzes specifically the phosphorylation on 2'-hydroxyl of the adenosine moiety of NAD to yield NADP. The protein is NAD kinase of Oleidesulfovibrio alaskensis (strain ATCC BAA-1058 / DSM 17464 / G20) (Desulfovibrio alaskensis).